Reading from the N-terminus, the 161-residue chain is Stress response protein YvgO (161 aa).

The N-terminal stretch at 1–26 is a signal peptide; that stretch reads MKRIRIPMTLALGAALTIAPLSFASA.

The chain is Stress response protein YvgO (yvgO) from Bacillus subtilis (strain 168).